Reading from the N-terminus, the 123-residue chain is MLGLEGPCWVGPGPDGGLAVSEEFGDVRLFGSARQPLGSLGGWTGHTFGCPAGICSNSEGNVIVADEQRRQVTLFPRAGPPICLVSEGLGQPLGVACAPQGQLLVADAKDNSIKVYQGLKELA.

NHL repeat units lie at residues 35–78 (QPLG…FPRA) and 79–119 (GPPI…YQGL).

This is NHL-repeat-containing protein 4 (NHLRC4) from Homo sapiens (Human).